The sequence spans 307 residues: 2-dehydropantoate 2-reductase (307 aa).

NADP(+) is bound by residues 7 to 12 (GSGAMG), N102, and A128. N102 lines the substrate pocket. K184 functions as the Proton donor in the catalytic mechanism. Substrate is bound by residues N188, N192, and S255. E268 contributes to the NADP(+) binding site.

The protein belongs to the ketopantoate reductase family.

It is found in the cytoplasm. It catalyses the reaction (R)-pantoate + NADP(+) = 2-dehydropantoate + NADPH + H(+). It participates in cofactor biosynthesis; (R)-pantothenate biosynthesis; (R)-pantoate from 3-methyl-2-oxobutanoate: step 2/2. In terms of biological role, catalyzes the NADPH-dependent reduction of ketopantoate into pantoic acid. This is 2-dehydropantoate 2-reductase (apbA) from Streptococcus pyogenes serotype M1.